Reading from the N-terminus, the 121-residue chain is Small ribosomal subunit protein bS16 (121 aa).

The interval 88–121 (GKAKLEKEKKAKAKTKEEENEGSKTESGSNEAES) is disordered. Residues 90-111 (AKLEKEKKAKAKTKEEENEGSK) show a composition bias toward basic and acidic residues. The segment covering 112–121 (TESGSNEAES) has biased composition (polar residues).

Belongs to the bacterial ribosomal protein bS16 family.

This chain is Small ribosomal subunit protein bS16, found in Prochlorococcus marinus (strain MIT 9215).